We begin with the raw amino-acid sequence, 874 residues long: Leucine--tRNA ligase (874 aa).

Positions 43–53 match the 'HIGH' region motif; sequence PYPSGRIHIGH. A 'KMSKS' region motif is present at residues 630–634; the sequence is KMSKS. Lys633 lines the ATP pocket.

Belongs to the class-I aminoacyl-tRNA synthetase family.

It is found in the cytoplasm. It carries out the reaction tRNA(Leu) + L-leucine + ATP = L-leucyl-tRNA(Leu) + AMP + diphosphate. This is Leucine--tRNA ligase from Bradyrhizobium diazoefficiens (strain JCM 10833 / BCRC 13528 / IAM 13628 / NBRC 14792 / USDA 110).